Here is a 149-residue protein sequence, read N- to C-terminus: 3-dehydroquinate dehydratase (149 aa).

Y26 acts as the Proton acceptor in catalysis. 3 residues coordinate substrate: N77, H83, and D90. H103 acts as the Proton donor in catalysis. Substrate-binding positions include 104–105 (LS) and R114.

This sequence belongs to the type-II 3-dehydroquinase family. In terms of assembly, homododecamer.

It catalyses the reaction 3-dehydroquinate = 3-dehydroshikimate + H2O. Its pathway is metabolic intermediate biosynthesis; chorismate biosynthesis; chorismate from D-erythrose 4-phosphate and phosphoenolpyruvate: step 3/7. Its function is as follows. Catalyzes a trans-dehydration via an enolate intermediate. This is 3-dehydroquinate dehydratase from Edwardsiella ictaluri (strain 93-146).